A 98-amino-acid polypeptide reads, in one-letter code: HssA/B-like protein 39 (98 aa).

Positions 1–21 are disordered; that stretch reads MTLFSSISSMSTSMSGSKSSI.

The protein belongs to the hssA/B family.

This chain is HssA/B-like protein 39 (hssl39), found in Dictyostelium discoideum (Social amoeba).